A 165-amino-acid chain; its full sequence is Pro-MCH (165 aa).

An N-terminal signal peptide occupies residues 1–21 (MAKMTLSSYMLMLAFSLFSQG). The interval 66–89 (YKNDESGFMNDDDNKNSKNTGSKQ) is disordered. Isoleucine 143 carries the post-translational modification Isoleucine amide. Cysteine 153 and cysteine 162 are joined by a disulfide.

It belongs to the MCH family. Pro-MCH is processed differentially in the brain and in peripheral organs producing two neuropeptides; NEI and MCH. A third peptide, NGE, may also be produced. Preferential processing in neurons by prohormone convertase 2 (PC2) generates NEI. MCH is generated in neurons of the lateral hypothalmic area by several prohormone convertases including PC1/3, PC2 and PC5/6. Predominantly expressed in hypothalamus. Also found in heart, intestine, spleen and testis (spermatogonia, early spermatocytes and Sertoli cells). In brain only mature MCH and NEI peptides are present. In peripheral tissues a large product, encompassing the NEI and MCH domains of the precursor, is found predominantly.

The protein resides in the secreted. In terms of biological role, MCH may act as a neurotransmitter or neuromodulator in a broad array of neuronal functions directed toward the regulation of goal-directed behavior, such as food intake, and general arousal. This Mus musculus (Mouse) protein is Pro-MCH (Pmch).